Here is a 262-residue protein sequence, read N- to C-terminus: Late embryogenesis abundant protein 31 (262 aa).

Residues 6-10 (QPKRP) carry the Nuclear localization signal (NLS) motif. SMP domains lie at 14–68 (VTYG…ANKR), 136–192 (ITIG…NHNA), and 201–260 (IKLI…NERA).

This sequence belongs to the LEA type SMP family. In terms of tissue distribution, embryo specific, only in dry mature seeds.

It is found in the nucleus. The protein localises to the nucleolus. The protein resides in the cytoplasm. In terms of biological role, LEA proteins are late embryonic proteins abundant in higher plant seed embryos. The function of those proteins is not known. Promotes germination rate. Enhances cation toxicity (e.g. lithium ion) and osmotic stress (e.g. NaCl and sorbitol) tolerance during germination and in seedlings. The protein is Late embryogenesis abundant protein 31 of Arabidopsis thaliana (Mouse-ear cress).